We begin with the raw amino-acid sequence, 100 residues long: Co-chaperonin GroES (100 aa).

Belongs to the GroES chaperonin family. In terms of assembly, heptamer of 7 subunits arranged in a ring. Interacts with the chaperonin GroEL.

Its subcellular location is the cytoplasm. Functionally, together with the chaperonin GroEL, plays an essential role in assisting protein folding. The GroEL-GroES system forms a nano-cage that allows encapsulation of the non-native substrate proteins and provides a physical environment optimized to promote and accelerate protein folding. GroES binds to the apical surface of the GroEL ring, thereby capping the opening of the GroEL channel. This chain is Co-chaperonin GroES, found in Rhodothermus marinus (Rhodothermus obamensis).